The following is a 470-amino-acid chain: Methylenetetrahydrofolate--tRNA-(uracil-5-)-methyltransferase TrmFO (470 aa).

Residue 10 to 15 (GAGLAG) coordinates FAD.

It belongs to the MnmG family. TrmFO subfamily. FAD serves as cofactor.

Its subcellular location is the cytoplasm. It carries out the reaction uridine(54) in tRNA + (6R)-5,10-methylene-5,6,7,8-tetrahydrofolate + NADH + H(+) = 5-methyluridine(54) in tRNA + (6S)-5,6,7,8-tetrahydrofolate + NAD(+). It catalyses the reaction uridine(54) in tRNA + (6R)-5,10-methylene-5,6,7,8-tetrahydrofolate + NADPH + H(+) = 5-methyluridine(54) in tRNA + (6S)-5,6,7,8-tetrahydrofolate + NADP(+). Catalyzes the folate-dependent formation of 5-methyl-uridine at position 54 (M-5-U54) in all tRNAs. The polypeptide is Methylenetetrahydrofolate--tRNA-(uracil-5-)-methyltransferase TrmFO (Prochlorococcus marinus (strain MIT 9215)).